The following is a 131-amino-acid chain: Snaclec alboaggregin-A subunit alpha (131 aa).

In terms of domain architecture, C-type lectin spans Asp1–Arg131. Disulfide bonds link Cys2/Cys13, Cys30/Cys127, and Cys102/Cys119.

Belongs to the snaclec family. In terms of assembly, heterotetramer of the subunits alpha, alpha', beta and beta'; disulfide-linked. In terms of tissue distribution, expressed by the venom gland.

It localises to the secreted. Functionally, potent platelet activator that aggregates platelets via both GPIbalpha (GP1BA) and GPVI (GP6). Induces a tyrosine phosphorylation profile in platelets that resembles this produced by collagen, involving the time dependent tyrosine phosphorylation of Fc receptor gamma chain (FCGR1A), phospholipase Cgamma2 (PLCG2), and LAT. This chain is Snaclec alboaggregin-A subunit alpha, found in Trimeresurus albolabris (White-lipped pit viper).